We begin with the raw amino-acid sequence, 396 residues long: Anhydro-N-acetylmuramic acid kinase (396 aa).

Position 21–28 (21–28 (GTSADGID)) interacts with ATP.

This sequence belongs to the anhydro-N-acetylmuramic acid kinase family.

The enzyme catalyses 1,6-anhydro-N-acetyl-beta-muramate + ATP + H2O = N-acetyl-D-muramate 6-phosphate + ADP + H(+). It participates in amino-sugar metabolism; 1,6-anhydro-N-acetylmuramate degradation. The protein operates within cell wall biogenesis; peptidoglycan recycling. In terms of biological role, catalyzes the specific phosphorylation of 1,6-anhydro-N-acetylmuramic acid (anhMurNAc) with the simultaneous cleavage of the 1,6-anhydro ring, generating MurNAc-6-P. Is required for the utilization of anhMurNAc either imported from the medium or derived from its own cell wall murein, and thus plays a role in cell wall recycling. The polypeptide is Anhydro-N-acetylmuramic acid kinase (Caldanaerobacter subterraneus subsp. tengcongensis (strain DSM 15242 / JCM 11007 / NBRC 100824 / MB4) (Thermoanaerobacter tengcongensis)).